The primary structure comprises 229 residues: Putative N-acetylmannosamine-6-phosphate 2-epimerase (229 aa).

It belongs to the NanE family.

The catalysed reaction is an N-acyl-D-glucosamine 6-phosphate = an N-acyl-D-mannosamine 6-phosphate. Its pathway is amino-sugar metabolism; N-acetylneuraminate degradation; D-fructose 6-phosphate from N-acetylneuraminate: step 3/5. Converts N-acetylmannosamine-6-phosphate (ManNAc-6-P) to N-acetylglucosamine-6-phosphate (GlcNAc-6-P). The protein is Putative N-acetylmannosamine-6-phosphate 2-epimerase of Shigella dysenteriae serotype 1 (strain Sd197).